A 199-amino-acid polypeptide reads, in one-letter code: UPF0637 protein LACR_1918 (199 aa).

Belongs to the UPF0637 family.

In Lactococcus lactis subsp. cremoris (strain SK11), this protein is UPF0637 protein LACR_1918.